The primary structure comprises 390 residues: Caveolae-associated protein 1 (390 aa).

Residue M1 is modified to N-acetylmethionine. A disordered region spans residues M1–S40. A required for homotrimerization and for interaction with CAVIN2 and CAVIN3 region spans residues M1 to K98. Residues P22–S40 show a composition bias toward low complexity. Phosphoserine is present on residues S36, S40, and S46. Residues V52–I62 are nuclear export signal. The leucine-zipper 1 stretch occupies residues L53 to L75. K116 is covalently cross-linked (Glycyl lysine isopeptide (Lys-Gly) (interchain with G-Cter in SUMO2)). S118 bears the Phosphoserine mark. Residue K122 forms a Glycyl lysine isopeptide (Lys-Gly) (interchain with G-Cter in SUMO2) linkage. A nuclear localization signal region spans residues K136–K152. Position 156 is a phosphotyrosine (Y156). Residue K161 forms a Glycyl lysine isopeptide (Lys-Gly) (interchain with G-Cter in SUMO1); alternate linkage. Residue K161 forms a Glycyl lysine isopeptide (Lys-Gly) (interchain with G-Cter in SUMO2); alternate linkage. K165 participates in a covalent cross-link: Glycyl lysine isopeptide (Lys-Gly) (interchain with G-Cter in SUMO2). The segment at L166–L186 is leucine-zipper 2. 2 positions are modified to phosphoserine: S167 and S169. K170 is covalently cross-linked (Glycyl lysine isopeptide (Lys-Gly) (interchain with G-Cter in SUMO2)). Phosphoserine occurs at positions 171 and 175. Residues L172–K181 show a composition bias toward basic and acidic residues. The tract at residues L172–L201 is disordered. Residues E182–L201 are compositionally biased toward acidic residues. Residues L199–V282 adopt a coiled-coil conformation. 2 positions are modified to phosphoserine: S202 and S203. The interval K233–R249 is nuclear localization signal. The interval L257–L297 is leucine-zipper 3. Residue S300 is modified to Phosphoserine. At T302 the chain carries Phosphothreonine. A Phosphotyrosine modification is found at Y308. A Glycyl lysine isopeptide (Lys-Gly) (interchain with G-Cter in SUMO2) cross-link involves residue K326. The disordered stretch occupies residues V344–S366. The span at G352–S365 shows a compositional bias: basic and acidic residues. Phosphoserine is present on residues S365, S366, S379, S387, and S389.

Belongs to the CAVIN family. In terms of assembly, component of the CAVIN complex composed of CAVIN1, CAVIN2, CAVIN3 and CAVIN4. Homotrimer. Interacts with TTF1. Interacts with RNA polymerase I subunit POLR1A/RPA1. Binds the 3' end of pre-rRNA. Interacts with transcription factor ZNF148. Interacts with LIPE in the adipocyte cytoplasm. Interacts with CAV1 and CAVIN3. Interacts with CAVIN2. Interacts with CAVIN4 and CAV3. Phosphorylated. Present in active and inactive forms. Changes in phosphorylation pattern may alter activity. Phosphorylation at Tyr-156 is essential for its functionin the regulation of ribosomal transcriptional activity. In terms of processing, five truncated forms are found in the caveolae. These are thought to be the result of proteolysis and may be phosphorylation-dependent. Post-translationally, monoubiquitinated.

Its subcellular location is the membrane. It localises to the caveola. The protein localises to the cell membrane. It is found in the microsome. The protein resides in the endoplasmic reticulum. Its subcellular location is the cytoplasm. It localises to the cytosol. The protein localises to the mitochondrion. It is found in the nucleus. Its function is as follows. Plays an important role in caveolae formation and organization. Essential for the formation of caveolae in all tissues. Core component of the CAVIN complex which is essential for recruitment of the complex to the caveolae in presence of calveolin-1 (CAV1). Essential for normal oligomerization of CAV1. Promotes ribosomal transcriptional activity in response to metabolic challenges in the adipocytes and plays an important role in the formation of the ribosomal transcriptional loop. Dissociates transcription complexes paused by DNA-bound TTF1, thereby releasing both RNA polymerase I and pre-RNA from the template. The caveolae biogenesis pathway is required for the secretion of proteins such as GASK1A. The polypeptide is Caveolae-associated protein 1 (Homo sapiens (Human)).